Consider the following 290-residue polypeptide: Zinc-finger homeodomain protein 2 (290 aa).

Acidic residues predominate over residues 1–15; sequence MDFDDHDEGDGDEEM. Residues 1–59 are disordered; that stretch reads MDFDDHDEGDGDEEMPPMPLSSGYDAPMQPGLGGGGGGVPKPGGGVGGGGGGGGGGGGG. Gly residues predominate over residues 31–59; it reads GLGGGGGGVPKPGGGVGGGGGGGGGGGGG. The ZF-HD dimerization-type; degenerate zinc-finger motif lies at 63 to 112; the sequence is YRECLKNHAVGIGGHAVDGCGEFMASGEEGSIDALRCAACGCHRNFHRKE. Residues 226–289 constitute a DNA-binding region (homeobox); that stretch reads KKRFRTKFTQ…NNKHTLGKKA (64 aa).

Homo- and heterodimer with other ZFHD proteins.

The protein localises to the nucleus. Putative transcription factor. This is Zinc-finger homeodomain protein 2 (ZHD2) from Oryza sativa subsp. japonica (Rice).